We begin with the raw amino-acid sequence, 510 residues long: NEDD8-activating enzyme E1 regulatory subunit (510 aa).

N-acetylalanine is present on Ala2. 2 positions are modified to N6-acetyllysine: Lys6 and Lys317. An interaction with UBA3 region spans residues 307-320 (DMIADSGKYIKLQN).

It belongs to the ubiquitin-activating E1 family. ULA1 subfamily. In terms of assembly, heterodimer of UBA3 and NAE1. The complex binds NEDD8 and UBE2M. Binds APP and TP53BP2. Post-translationally, ubiquitinated by TRIP12, leading to its degradation by the proteasome.

It is found in the cell membrane. It participates in protein modification; protein neddylation. With respect to regulation, binding of TP53BP2 to the regulatory subunit NAE1 decreases neddylation activity. Regulatory subunit of the dimeric UBA3-NAE1 E1 enzyme. E1 activates NEDD8 by first adenylating its C-terminal glycine residue with ATP, thereafter linking this residue to the side chain of the catalytic cysteine, yielding a NEDD8-UBA3 thioester and free AMP. E1 finally transfers NEDD8 to the catalytic cysteine of UBE2M. Necessary for cell cycle progression through the S-M checkpoint. Overexpression of NAE1 causes apoptosis through deregulation of NEDD8 conjugation. The covalent attachment of NEDD8 to target proteins is known as 'neddylation' and the process is involved in the regulation of cell growth, viability and development. The polypeptide is NEDD8-activating enzyme E1 regulatory subunit (NAE1) (Macaca fascicularis (Crab-eating macaque)).